Consider the following 504-residue polypeptide: Plasma protease C1 inhibitor (504 aa).

The N-terminal stretch at Met-1–Ser-22 is a signal peptide. Residues Asp-23–Asn-75 form a disordered region. Positions Ser-24–Asp-33 are enriched in polar residues. Over residues Gly-40 to Ile-55 the composition is skewed to basic and acidic residues. Residues Thr-58–Asn-75 show a composition bias toward polar residues. Residues Asn-75, Asn-83, Asn-107, Asn-243, and Asn-356 are each glycosylated (N-linked (GlcNAc...) asparagine). Residues Ala-94 to Leu-132 form a disordered region. Positions Ser-100–Glu-125 are enriched in low complexity.

It belongs to the serpin family. In terms of assembly, interacts with MASP1.

Its subcellular location is the secreted. Its function is as follows. Serine protease inhibitor, which acrs as a regulator of the classical complement pathway. Forms a proteolytically inactive stoichiometric complex with the C1r or C1s proteases. May also regulate blood coagulation, fibrinolysis and the generation of kinins. Very efficient inhibitor of FXIIa. Inhibits chymotrypsin and kallikrein. The sequence is that of Plasma protease C1 inhibitor (Serping1) from Rattus norvegicus (Rat).